The following is a 362-amino-acid chain: DNA replication and repair protein RecF (362 aa).

30 to 37 contributes to the ATP binding site; sequence GDNAQGKT.

It belongs to the RecF family.

The protein resides in the cytoplasm. The RecF protein is involved in DNA metabolism; it is required for DNA replication and normal SOS inducibility. RecF binds preferentially to single-stranded, linear DNA. It also seems to bind ATP. The protein is DNA replication and repair protein RecF of Agathobacter rectalis (strain ATCC 33656 / DSM 3377 / JCM 17463 / KCTC 5835 / VPI 0990) (Eubacterium rectale).